The sequence spans 415 residues: Probable tRNA pseudouridine synthase D (415 aa).

The Nucleophile role is filled by Asp83. The 221-residue stretch at 158 to 378 (GFPNYFGYQR…PGRRRELLIR (221 aa)) folds into the TRUD domain.

Belongs to the pseudouridine synthase TruD family.

The catalysed reaction is uridine(13) in tRNA = pseudouridine(13) in tRNA. Could be responsible for synthesis of pseudouridine from uracil-13 in transfer RNAs. In Thermococcus gammatolerans (strain DSM 15229 / JCM 11827 / EJ3), this protein is Probable tRNA pseudouridine synthase D.